The sequence spans 543 residues: Hydroxylamine reductase (543 aa).

[4Fe-4S] cluster contacts are provided by cysteine 5, cysteine 8, cysteine 17, and cysteine 23. Hybrid [4Fe-2O-2S] cluster-binding residues include histidine 236, glutamate 260, cysteine 304, cysteine 398, cysteine 426, cysteine 451, glutamate 486, and lysine 488. Cysteine 398 bears the Cysteine persulfide mark.

Belongs to the HCP family. It depends on [4Fe-4S] cluster as a cofactor. Hybrid [4Fe-2O-2S] cluster is required as a cofactor.

Its subcellular location is the cytoplasm. The catalysed reaction is A + NH4(+) + H2O = hydroxylamine + AH2 + H(+). Functionally, catalyzes the reduction of hydroxylamine to form NH(3) and H(2)O. This is Hydroxylamine reductase from Bacteroides fragilis (strain YCH46).